A 176-amino-acid chain; its full sequence is Inorganic pyrophosphatase (176 aa).

The substrate site is built by K30, R44, and Y56. Mg(2+) contacts are provided by D66, D71, and D103. Y142 contributes to the substrate binding site.

It belongs to the PPase family. Homohexamer. Mg(2+) is required as a cofactor.

Its subcellular location is the cytoplasm. The catalysed reaction is diphosphate + H2O = 2 phosphate + H(+). In terms of biological role, catalyzes the hydrolysis of inorganic pyrophosphate (PPi) forming two phosphate ions. The chain is Inorganic pyrophosphatase from Brucella melitensis biotype 1 (strain ATCC 23456 / CCUG 17765 / NCTC 10094 / 16M).